The primary structure comprises 356 residues: Dual-specificity RNA methyltransferase RlmN (356 aa).

The active-site Proton acceptor is the E89. One can recognise a Radical SAM core domain in the interval 108–341; the sequence is KHARYTICVS…CTIRESKGLD (234 aa). Cysteines 115 and 346 form a disulfide. [4Fe-4S] cluster contacts are provided by C122, C126, and C129. S-adenosyl-L-methionine is bound by residues 172–173, S204, 227–229, and N303; these read GE and SLH. The S-methylcysteine intermediate role is filled by C346.

Belongs to the radical SAM superfamily. RlmN family. Requires [4Fe-4S] cluster as cofactor.

It localises to the cytoplasm. It carries out the reaction adenosine(2503) in 23S rRNA + 2 reduced [2Fe-2S]-[ferredoxin] + 2 S-adenosyl-L-methionine = 2-methyladenosine(2503) in 23S rRNA + 5'-deoxyadenosine + L-methionine + 2 oxidized [2Fe-2S]-[ferredoxin] + S-adenosyl-L-homocysteine. It catalyses the reaction adenosine(37) in tRNA + 2 reduced [2Fe-2S]-[ferredoxin] + 2 S-adenosyl-L-methionine = 2-methyladenosine(37) in tRNA + 5'-deoxyadenosine + L-methionine + 2 oxidized [2Fe-2S]-[ferredoxin] + S-adenosyl-L-homocysteine. Specifically methylates position 2 of adenine 2503 in 23S rRNA and position 2 of adenine 37 in tRNAs. m2A2503 modification seems to play a crucial role in the proofreading step occurring at the peptidyl transferase center and thus would serve to optimize ribosomal fidelity. The protein is Dual-specificity RNA methyltransferase RlmN of Campylobacter lari (strain RM2100 / D67 / ATCC BAA-1060).